We begin with the raw amino-acid sequence, 573 residues long: PCNA-interacting partner (573 aa).

Positions valine 463 to arginine 511 are disordered. Residues alanine 474 to proline 494 are compositionally biased toward basic and acidic residues. The span at arginine 495–lysine 504 shows a compositional bias: basic residues.

Belongs to the PARI family. As to quaternary structure, interacts with RAD51 and PCNA. Interacts with PARP1. Interacts with TASOR. Present in testis (at protein level). Expressed in testis, gastrointestinal tract (jejunum, ileum, and colon) and immune system (thymus and spleen). Weakly expressed in lung, kidney, pituitary gland and muscle.

It is found in the cytoplasm. Its subcellular location is the nucleus. Its function is as follows. Required to suppress inappropriate homologous recombination, thereby playing a central role DNA repair and in the maintenance of genomic stability. Antagonizes homologous recombination by interfering with the formation of the RAD51-DNA homologous recombination structure. Positively regulate the poly(ADP-ribosyl)ation activity of PARP1; however such function may be indirect. Binds single-strand DNA and poly(A) homopolymers. The sequence is that of PCNA-interacting partner (Parpbp) from Rattus norvegicus (Rat).